A 306-amino-acid polypeptide reads, in one-letter code: Glutathione transport system permease protein GsiC (306 aa).

The Cytoplasmic portion of the chain corresponds to 1–8; that stretch reads MLNYVIKR. The chain crosses the membrane as a helical span at residues 9 to 29; sequence LLGLIPTLFIVSVLVFLFVHM. The Periplasmic segment spans residues 30-102; sequence LPGDPARLIA…SRFMPTLWLT (73 aa). Residues 95 to 292 form the ABC transmembrane type-1 domain; that stretch reads FMPTLWLTIT…LEFILINLVV (198 aa). A helical transmembrane segment spans residues 103-123; sequence ITSMVWAVIFGMAAGIIAAVW. Topologically, residues 124 to 134 are cytoplasmic; it reads RNRWPDRLSMT. Residues 135–155 form a helical membrane-spanning segment; it reads IAVSGISFPAFALGMLLIQVF. Over 156 to 168 the chain is Periplasmic; that stretch reads SVELGWLPTVGAD. The chain crosses the membrane as a helical span at residues 169–189; sequence SWQHYILPSLTLGAAVAAVMA. Residues 190-228 are Cytoplasmic-facing; it reads RFTRASFVDVLSEDYMRTARAKGVSETWVVLKHGLRNAM. The helical transmembrane segment at 229-249 threads the bilayer; sequence IPVVTMMGLQFGFLLGGSIVV. Over 250-277 the chain is Periplasmic; it reads EKVFNWPGLGRLLVDSVEMRDYPVIQAE. The helical transmembrane segment at 278–298 threads the bilayer; that stretch reads ILLFSLEFILINLVVDVLYAA. The Cytoplasmic segment spans residues 299–306; that stretch reads INPAIRYK.

Belongs to the binding-protein-dependent transport system permease family. In terms of assembly, the complex is composed of two ATP-binding proteins (GsiA), two transmembrane proteins (GsiC and GsiD) and a solute-binding protein (GsiB).

Its subcellular location is the cell inner membrane. Its function is as follows. Part of the ABC transporter complex GsiABCD involved in glutathione import. Probably responsible for the translocation of the substrate across the membrane. The protein is Glutathione transport system permease protein GsiC of Escherichia coli O6:H1 (strain CFT073 / ATCC 700928 / UPEC).